The following is a 495-amino-acid chain: Protein adenylyltransferase Fic (495 aa).

The tract at residues 1–23 (MGTEAEPPSPPSPPAQQQEQANP) is disordered. Residues 36 to 58 (LYRLVLFFIAGSLTAWMFHAFSS) form a helical membrane-spanning segment. TPR repeat units lie at residues 121–154 (ALVS…APRH) and 155–189 (PEVL…SPSN). The Inhibitory (S/T)XXXE(G/N) motif motif lies at 246–251 (SVGIEG). ATP contacts are provided by residues Glu250 and 331–334 (VGGH). A Fido domain is found at 300–435 (ITIKDILELH…IRPFVRFIAD (136 aa)). His378 is an active-site residue. Residues 382–389 (DGNGRTSR), 414–415 (YY), and Asn422 contribute to the ATP site.

This sequence belongs to the fic family. Homodimer.

It localises to the membrane. The enzyme catalyses L-tyrosyl-[protein] + ATP = O-(5'-adenylyl)-L-tyrosyl-[protein] + diphosphate. It carries out the reaction L-threonyl-[protein] + ATP = 3-O-(5'-adenylyl)-L-threonyl-[protein] + diphosphate. It catalyses the reaction 3-O-(5'-adenylyl)-L-threonyl-[protein] + H2O = L-threonyl-[protein] + AMP + H(+). With respect to regulation, the side chain of Glu-250 determines which of the two opposing activities (AMPylase or de-AMPylase) will take place. In response to endoplasmic reticulum stress, mediates de-AMPylase activity. Adenylyltransferase activity is inhibited by the inhibitory helix present at the N-terminus: Glu-250 binds ATP and competes with ATP-binding at Arg-389, thereby preventing adenylyltransferase activity. In unstressed cells, disengagement of Glu-250 promotes adenylyltransferase activity. Activation dissociates ATP-binding from Glu-250, allowing ordered binding of the entire ATP moiety with the alpha-phosphate in an orientation that is productive for accepting an incoming target hydroxyl side chain. Protein that can both mediate the addition of adenosine 5'-monophosphate (AMP) to specific residues of target proteins (AMPylation), and the removal of the same modification from target proteins (de-AMPylation), depending on the context. The side chain of Glu-250 determines which of the two opposing activities (AMPylase or de-AMPylase) will take place. Acts as a key regulator of the unfolded protein response (UPR) by mediating AMPylation or de-AMPylation of Hsc70-3/BiP. In unstressed cells, acts as an adenylyltransferase by mediating AMPylation of Hsc70-3/BiP at 'Thr-518', thereby inactivating it. In response to endoplasmic reticulum stress, acts as a phosphodiesterase by mediating removal of ATP (de-AMPylation) from Hsc70-3/BiP at 'Thr-518', leading to restore HSPA5/BiP activity. This chain is Protein adenylyltransferase Fic, found in Drosophila erecta (Fruit fly).